The following is a 100-amino-acid chain: Urease subunit gamma (100 aa).

Belongs to the urease gamma subunit family. Heterotrimer of UreA (gamma), UreB (beta) and UreC (alpha) subunits. Three heterotrimers associate to form the active enzyme.

The protein resides in the cytoplasm. The enzyme catalyses urea + 2 H2O + H(+) = hydrogencarbonate + 2 NH4(+). Its pathway is nitrogen metabolism; urea degradation; CO(2) and NH(3) from urea (urease route): step 1/1. The protein is Urease subunit gamma of Kocuria rhizophila (strain ATCC 9341 / DSM 348 / NBRC 103217 / DC2201).